A 392-amino-acid chain; its full sequence is 2'-deamino-2'-hydroxyneamine transaminase (392 aa).

K249 bears the N6-(pyridoxal phosphate)lysine mark.

The protein belongs to the class-III pyridoxal-phosphate-dependent aminotransferase family. Pyridoxal 5'-phosphate serves as cofactor.

The enzyme catalyses neamine + 2-oxoglutarate = 6'-oxoparomamine + L-glutamate. The catalysed reaction is 2'-deamino-2'-hydroxyneamine + 2-oxoglutarate = 2'-deamino-2'-hydroxy-6'-dehydroparomamine + L-glutamate. It participates in antibiotic biosynthesis; kanamycin biosynthesis. Aminotransferase that has 6'-oxoglucosaminyl:L-glutamate aminotransferase activity by catalyzing pyridoxal-5'-phosphate-mediated transamination leading to the conversion of paromamine to neamine in the biosynthetic pathway of kanamycin B. This Streptomyces kanamyceticus protein is 2'-deamino-2'-hydroxyneamine transaminase (kacL).